Consider the following 194-residue polypeptide: Troponin I 4 (194 aa).

The segment at 1 to 27 (MSDVDADEARKMAERERKKEEVRKRLE) is disordered. Over residues 7-27 (DEARKMAERERKKEEVRKRLE) the composition is skewed to basic and acidic residues.

It belongs to the troponin I family. In terms of tissue distribution, expression is detected only in pharyngeal muscle cells from embryos to adults.

In terms of biological role, troponin I is the inhibitory subunit of troponin, the thin filament regulatory complex which confers calcium-sensitivity to muscle actomyosin ATPase activity. This chain is Troponin I 4 (tni-4), found in Caenorhabditis elegans.